The following is a 607-amino-acid chain: Terpenoid synthase 29 (607 aa).

5 residues coordinate Mg(2+): aspartate 358, aspartate 362, asparagine 502, threonine 506, and glutamate 510. The DDXXD motif motif lies at 358 to 362; that stretch reads DDTYD.

It belongs to the terpene synthase family. Tpsa subfamily. Requires Mg(2+) as cofactor. It depends on Mn(2+) as a cofactor. Predominantly expressed in flowers but also in siliques, roots, leaves and stems.

It is found in the cytoplasm. It functions in the pathway secondary metabolite biosynthesis; terpenoid biosynthesis. In Arabidopsis thaliana (Mouse-ear cress), this protein is Terpenoid synthase 29 (TPS29).